A 197-amino-acid polypeptide reads, in one-letter code: Outer-membrane lipoprotein LolB (197 aa).

An N-terminal signal peptide occupies residues 1–20 (MNRSRRLALFCLGAPLLLQA). A lipid anchor (N-palmitoyl cysteine) is attached at Cys21. Cys21 carries the S-diacylglycerol cysteine lipid modification.

This sequence belongs to the LolB family. In terms of assembly, monomer.

Its subcellular location is the cell outer membrane. Its function is as follows. Plays a critical role in the incorporation of lipoproteins in the outer membrane after they are released by the LolA protein. This is Outer-membrane lipoprotein LolB from Cupriavidus necator (strain ATCC 17699 / DSM 428 / KCTC 22496 / NCIMB 10442 / H16 / Stanier 337) (Ralstonia eutropha).